Reading from the N-terminus, the 157-residue chain is Oocyte zinc finger protein XlCOF2 (157 aa).

C2H2-type zinc fingers lie at residues 6-28 (FTCT…MRIH), 34-56 (YSCA…QKNP), 79-101 (FTCT…QRLH), 107-129 (FSCA…QNTH), and 135-157 (FTCT…QKIH).

Belongs to the krueppel C2H2-type zinc-finger protein family.

The protein resides in the nucleus. Its function is as follows. May be involved in transcriptional regulation. In Xenopus laevis (African clawed frog), this protein is Oocyte zinc finger protein XlCOF2.